The primary structure comprises 320 residues: Putative cyclin-D7-1 (320 aa).

Residues 1–46 (MDDDDDTSFNNSLDLYCDEDPFDSTPPPPPPPPEQQQQAGTTTPDD) form a disordered region. A compositionally biased stretch (pro residues) spans 24-34 (STPPPPPPPPE). Residues 35–44 (QQQQAGTTTP) show a composition bias toward low complexity.

The protein belongs to the cyclin family. Cyclin D subfamily.

This is Putative cyclin-D7-1 (CYCD7-1) from Oryza sativa subsp. japonica (Rice).